Here is a 734-residue protein sequence, read N- to C-terminus: Subtilisin-like protease (734 aa).

An N-terminal signal peptide occupies residues 1 to 20 (MTCICIFSIAFLLSFHLTTA). One can recognise an Inhibitor I9 domain in the interval 28–109 (TYIVHVDKPD…AKLEKVLTLH (82 aa)). The region spanning 114-591 (PNFLGLYQNM…AGHVNPSKAS (478 aa)) is the Peptidase S8 domain. Asp141 serves as the catalytic Charge relay system. Asn172 carries N-linked (GlcNAc...) asparagine glycosylation. The active-site Charge relay system is the His199. N-linked (GlcNAc...) asparagine glycans are attached at residues Asn222 and Asn306. Residues 357 to 442 (PLVYPGTSDE…THVGYAAGEM (86 aa)) form the PA domain. 2 N-linked (GlcNAc...) asparagine glycosylation sites follow: Asn448 and Asn509. The Charge relay system role is filled by Ser524. Residue Asn652 is glycosylated (N-linked (GlcNAc...) asparagine).

The protein belongs to the peptidase S8 family.

It is found in the secreted. Its subcellular location is the extracellular space. The protein resides in the apoplast. Required for arbuscular mycorrhiza (AM) development during AM symbiosis with AM fungi (e.g. Glomeromycota intraradices). The protein is Subtilisin-like protease of Petunia hybrida (Petunia).